The following is a 1190-amino-acid chain: Pumilio homolog 1 (1190 aa).

Disordered stretches follow at residues 38–74 (LTSG…GVAG), 491–531 (SNSA…QQTD), 611–675 (ANGP…NSSL), and 744–777 (GPVG…LNLG). Low complexity-rich tracts occupy residues 491 to 508 (SNSA…GQQQ), 518 to 531 (PLTP…QQTD), 628 to 675 (QQPQ…NSSL), and 765 to 777 (LSSH…LNLG). Residues 830–1172 (GRSRLLEDFR…HILAKLEKYY (343 aa)) form the PUM-HD domain. Pumilio repeat units lie at residues 850–885 (EIAG…LVFN), 886–921 (EILQ…ALAE), 922–959 (RIRG…EMVR), 960–995 (ELDG…FIID), 996–1031 (AFKS…PILE), 1032–1067 (ELHQ…KIVA), 1068–1103 (EIRG…MLID), and 1107–1146 (TMND…IVMH). The adenine-nucleotide binding in RNA target stretch occupies residues 865-869 (SRFIQ). Positions 901–905 (NYVIQ) are uracil-nucleotide binding in RNA target. The tract at residues 937-941 (CRVIQ) is adenine-nucleotide binding in RNA target. A non-specific-nucleotide binding in RNA target region spans residues 975–979 (NHVVQ). The adenine-nucleotide binding in RNA target stretch occupies residues 1011–1015 (CRVIQ). A uracil-nucleotide binding in RNA target region spans residues 1047-1051 (NYVIQ). Residues 1083–1087 (SNVVE) are guanine-nucleotide binding in RNA target. A uracil-nucleotide binding in RNA target region spans residues 1126 to 1130 (NYVVQ).

As to quaternary structure, interacts with cpeb1-a; interacts with unphosphorylated cpeb1-a but not phosphorylated. Component of a complex with papd4, sympk, tacc3, parn, dazl and cpeb1. Post-translationally, phosphorylated. Phosphorylation takes place at the time of dissociation of cpeb1-a from pum1 and the translational activation of ccnb1 mRNA. In terms of tissue distribution, present in oocytes (at protein level).

Its subcellular location is the cytoplasm. It is found in the P-body. It localises to the cytoplasmic granule. Sequence-specific RNA-binding protein that acts as a post-transcriptional repressor by binding the 3'-UTR of mRNA targets. Binds to an RNA consensus sequence, the Pumilio Response Element (PRE), 5'-UGUANAUA-3', that is related to the Nanos Response Element (NRE). Mediates post-transcriptional repression of transcripts via different mechanisms: acts via direct recruitment of deadenylase complexes leading to translational inhibition and mRNA degradation. Also mediates deadenylation-independent repression by promoting accessibility of miRNAs. Acts as a post-transcriptional repressor of ccnb1 mRNA during oocyte maturation. The chain is Pumilio homolog 1 from Xenopus laevis (African clawed frog).